A 209-amino-acid polypeptide reads, in one-letter code: Uracil phosphoribosyltransferase (209 aa).

5-phospho-alpha-D-ribose 1-diphosphate-binding positions include arginine 79, arginine 104, and 131–139 (DPMLATGGS). Uracil contacts are provided by residues isoleucine 194 and 199 to 201 (GDA). Aspartate 200 lines the 5-phospho-alpha-D-ribose 1-diphosphate pocket.

The protein belongs to the UPRTase family. It depends on Mg(2+) as a cofactor.

It carries out the reaction UMP + diphosphate = 5-phospho-alpha-D-ribose 1-diphosphate + uracil. It functions in the pathway pyrimidine metabolism; UMP biosynthesis via salvage pathway; UMP from uracil: step 1/1. Allosterically activated by GTP. Functionally, catalyzes the conversion of uracil and 5-phospho-alpha-D-ribose 1-diphosphate (PRPP) to UMP and diphosphate. The sequence is that of Uracil phosphoribosyltransferase from Levilactobacillus brevis (strain ATCC 367 / BCRC 12310 / CIP 105137 / JCM 1170 / LMG 11437 / NCIMB 947 / NCTC 947) (Lactobacillus brevis).